A 299-amino-acid chain; its full sequence is UDP-N-acetylenolpyruvoylglucosamine reductase (299 aa).

The FAD-binding PCMH-type domain occupies arginine 21–glycine 189. The active site involves arginine 168. The active-site Proton donor is serine 219. Glutamate 289 is a catalytic residue.

Belongs to the MurB family. Requires FAD as cofactor.

It is found in the cytoplasm. The catalysed reaction is UDP-N-acetyl-alpha-D-muramate + NADP(+) = UDP-N-acetyl-3-O-(1-carboxyvinyl)-alpha-D-glucosamine + NADPH + H(+). Its pathway is cell wall biogenesis; peptidoglycan biosynthesis. Functionally, cell wall formation. The protein is UDP-N-acetylenolpyruvoylglucosamine reductase of Parasynechococcus marenigrum (strain WH8102).